Here is a 94-residue protein sequence, read N- to C-terminus: MPKLAVVLLVLLILPLSYFDAAGGQAVQGDRRGNGLARYLQRGDREVQECQVDTPGSSWGKCCMTRMCGTMCCSRSVCTCVYHWRRGHGCSCPG.

Positions 1–24 are cleaved as a signal peptide; the sequence is MPKLAVVLLVLLILPLSYFDAAGG. Positions 25–45 are excised as a propeptide; sequence QAVQGDRRGNGLARYLQRGDR. 4-carboxyglutamate; partial is present on E46. E49 is subject to 4-carboxyglutamate. Residue P55 is modified to 4-hydroxyproline. 4 disulfide bridges follow: C63/C72, C68/C80, C73/C90, and C78/C92.

The protein belongs to the conotoxin D superfamily. Hetero-, homo- or pseudo-homodimer (identical sequence, different post-translational modifications). Expressed by the venom duct.

Its subcellular location is the secreted. In terms of biological role, alpha-D-conopeptides act on postsynaptic membranes, they bind to the nicotinic acetylcholine receptors (nAChR) and thus inhibit them. Through its two C-terminal domains, this homodimeric protein would bind to two nAChR allosteric sites, located outside the nAChR C-loop of the principal binding face and at the adjacent binding interface in a clockwise direction. This toxin specifically blocks mammalian neuronal nAChR of the alpha-7/CHRNA7 (IC(50)=0.25 nM), alpha-3-beta-2/CHRNA3-CHRNB2 (IC(50)=2.8 nM), and alpha-4-beta-2/CHRNA4-CHRNB2 (IC(50)=28.6 nM) subtypes. Has no effect on alpha-3-beta-4/CHRNA3-CHRNB4, alpha-4-beta-4/CHRNA4-CHRNB4 and alpha-1-beta-1-epsilon-delta/CHRNA1-CHRNB1-CHRNE-CHRND subtypes of nAChRs. The sequence is that of Alpha-conotoxin Cp20.3 from Conus capitaneus (Captain cone).